Here is a 407-residue protein sequence, read N- to C-terminus: Pleckstrin homology-like domain family A member 1 (407 aa).

Basic and acidic residues-rich tracts occupy residues 1 to 11 (MRRTPAAERLS) and 54 to 63 (RSAEDGREQP). The disordered stretch occupies residues 1–67 (MRRTPAAERL…DGREQPAHGS (67 aa)). The PH domain occupies 149–184 (SGCKALKEGVLEKRSDGLLQLWKKKCCILTEEGLLL). Disordered regions lie at residues 188–224 (KQVQHQQQQQQQQQPGQGTAEPSQPSGPAVTSLEPPA) and 296–407 (QQHL…SNSA). Low complexity-rich tracts occupy residues 189–204 (QVQHQQQQQQQQQPGQ) and 297–319 (QHLVQQQPPQTQQIQPQPQQPQI). Residues 312-348 (PQPQQPQIQPQPQPQIQPQPQPQPQPQPQPQQQPQPQ) form a 15 X 2 AA repeats of P-Q region. Residues 320–344 (QPQPQPQIQPQPQPQPQPQPQPQQQ) are compositionally biased toward pro residues. Residues 354–381 (PHPHPHLYPHPHPHAHSHPHPHPHPHPH) are 11 X 2 AA repeats of P-H. Residues 354–384 (PHPHPHLYPHPHPHAHSHPHPHPHPHPHQLQ) show a composition bias toward basic residues. Residues 385–395 (HAHQPLHSQPQ) are compositionally biased toward low complexity.

Interacts with RPL14, EIF3S7 and PABPC4.

It is found in the cytoplasm. Its subcellular location is the cytoplasmic vesicle. The protein localises to the nucleus. It localises to the nucleolus. Seems to be involved in regulation of apoptosis. May be involved in detachment-mediated programmed cell death. May mediate apoptosis during neuronal development. May be involved in regulation of anti-apoptotic effects of IGF1. May be involved in translational regulation. The sequence is that of Pleckstrin homology-like domain family A member 1 (Phlda1) from Rattus norvegicus (Rat).